The primary structure comprises 77 residues: Bradykinin-potentiating peptide (77 aa).

The N-terminal stretch at 1–22 is a signal peptide; sequence MNKKTLLVIFIVTLLIADEVNS. A propeptide spanning residues 74–77 is cleaved from the precursor; the sequence is RRRR.

Belongs to the non-disulfide-bridged peptide (NDBP) superfamily. Long chain multifunctional peptide (group 2) family. As to expression, expressed by the venom gland.

Its subcellular location is the secreted. Functionally, antimicrobial peptide. May also inhibit angiotensin-converting enzyme (ACE) and potentiate bradykinin (BK). This is Bradykinin-potentiating peptide from Tityus discrepans (Venezuelan scorpion).